The sequence spans 524 residues: Cytochrome P450 4F3 (524 aa).

A helical transmembrane segment spans residues 15–35 (AASPWLLLLLVGASCLLAYIL). Cys468 provides a ligand contact to heme.

Belongs to the cytochrome P450 family. Heme is required as a cofactor.

The protein resides in the endoplasmic reticulum membrane. It localises to the microsome membrane. It catalyses the reaction leukotriene B4 + reduced [NADPH--hemoprotein reductase] + O2 = 18-hydroxy-leukotriene B4 + oxidized [NADPH--hemoprotein reductase] + H2O + H(+). The enzyme catalyses leukotriene B4 + reduced [NADPH--hemoprotein reductase] + O2 = 19-hydroxy-leukotriene B4 + oxidized [NADPH--hemoprotein reductase] + H2O + H(+). It participates in lipid metabolism; leukotriene B4 degradation. In terms of biological role, a cytochrome P450 monooxygenase involved in the metabolism of the pro-inflammatory lipid mediator leukotriene B4 (LTB4). Hydroxylates at the omega-1 and omega-2 positions LTB4. This oxidation step leads to LTB4 inactivation, which is postulated to be a crucial part of the resolution of inflammation. Mechanistically, uses molecular oxygen inserting one oxygen atom into a substrate, and reducing the second into a water molecule, with two electrons provided by NADPH via cytochrome P450 reductase (CPR; NADPH-ferrihemoprotein reductase). This is Cytochrome P450 4F3 from Rattus norvegicus (Rat).